A 76-amino-acid chain; its full sequence is Conotoxin Vc6.6 (76 aa).

Residues 1–22 (MKLTCMVIVAVLFLTANTFVTA) form the signal peptide. Residues 23 to 52 (VPHSSNALENLYLKAHHEMNNPKDSELNKR) constitute a propeptide that is removed on maturation. 3 disulfides stabilise this stretch: Cys53–Cys67, Cys60–Cys71, and Cys66–Cys75.

The protein belongs to the conotoxin O1 superfamily. Expressed by the venom duct.

It is found in the secreted. This chain is Conotoxin Vc6.6, found in Conus victoriae (Queen Victoria cone).